Here is a 169-residue protein sequence, read N- to C-terminus: NADH-quinone oxidoreductase subunit I (169 aa).

2 4Fe-4S ferredoxin-type domains span residues 61–90 (RKYK…IEAQ) and 100–129 (VRYD…EGPN). [4Fe-4S] cluster contacts are provided by cysteine 70, cysteine 73, cysteine 76, cysteine 80, cysteine 109, cysteine 112, cysteine 115, and cysteine 119.

The protein belongs to the complex I 23 kDa subunit family. In terms of assembly, NDH-1 is composed of 14 different subunits. Subunits NuoA, H, J, K, L, M, N constitute the membrane sector of the complex. [4Fe-4S] cluster is required as a cofactor.

Its subcellular location is the cell inner membrane. The catalysed reaction is a quinone + NADH + 5 H(+)(in) = a quinol + NAD(+) + 4 H(+)(out). In terms of biological role, NDH-1 shuttles electrons from NADH, via FMN and iron-sulfur (Fe-S) centers, to quinones in the respiratory chain. The immediate electron acceptor for the enzyme in this species is believed to be ubiquinone. Couples the redox reaction to proton translocation (for every two electrons transferred, four hydrogen ions are translocated across the cytoplasmic membrane), and thus conserves the redox energy in a proton gradient. This is NADH-quinone oxidoreductase subunit I from Ehrlichia chaffeensis (strain ATCC CRL-10679 / Arkansas).